The sequence spans 190 residues: Probable DNA replication complex GINS protein PSF2 (190 aa).

This sequence belongs to the GINS2/PSF2 family. Component of the GINS complex which is a heterotetramer of gins1, gins2, gins3 and gins4.

The protein localises to the nucleus. Its function is as follows. The GINS complex plays an essential role in the initiation of DNA replication. In Brugia malayi (Filarial nematode worm), this protein is Probable DNA replication complex GINS protein PSF2.